Here is a 180-residue protein sequence, read N- to C-terminus: Alkyl hydroperoxide reductase AhpD (180 aa).

Cys131 functions as the Proton donor in the catalytic mechanism. Cysteines 131 and 134 form a disulfide. Cys134 functions as the Cysteine sulfenic acid (-SOH) intermediate in the catalytic mechanism.

The protein belongs to the AhpD family.

The enzyme catalyses N(6)-[(R)-dihydrolipoyl]-L-lysyl-[lipoyl-carrier protein] + a hydroperoxide = N(6)-[(R)-lipoyl]-L-lysyl-[lipoyl-carrier protein] + an alcohol + H2O. Antioxidant protein with alkyl hydroperoxidase activity. Required for the reduction of the AhpC active site cysteine residues and for the regeneration of the AhpC enzyme activity. This Beijerinckia indica subsp. indica (strain ATCC 9039 / DSM 1715 / NCIMB 8712) protein is Alkyl hydroperoxide reductase AhpD.